A 438-amino-acid polypeptide reads, in one-letter code: Probable D-serine dehydratase (438 aa).

At Lys114 the chain carries N6-(pyridoxal phosphate)lysine.

This sequence belongs to the serine/threonine dehydratase family. DsdA subfamily. Pyridoxal 5'-phosphate serves as cofactor.

The catalysed reaction is D-serine = pyruvate + NH4(+). This Histophilus somni (strain 2336) (Haemophilus somnus) protein is Probable D-serine dehydratase.